A 535-amino-acid chain; its full sequence is Phosphoenolpyruvate carboxykinase (ATP) (535 aa).

Substrate is bound by residues Arg59, Tyr201, and Lys207. ATP contacts are provided by residues Lys207, His226, and 243–251 (GLSGTGKTT). The Mn(2+) site is built by Lys207 and His226. Asp264 lines the Mn(2+) pocket. ATP is bound by residues Glu292, Arg328, 444-445 (RI), and Thr450. Arg328 is a binding site for substrate.

This sequence belongs to the phosphoenolpyruvate carboxykinase (ATP) family. Requires Mn(2+) as cofactor.

It is found in the cytoplasm. The catalysed reaction is oxaloacetate + ATP = phosphoenolpyruvate + ADP + CO2. The protein operates within carbohydrate biosynthesis; gluconeogenesis. Functionally, involved in the gluconeogenesis. Catalyzes the conversion of oxaloacetate (OAA) to phosphoenolpyruvate (PEP) through direct phosphoryl transfer between the nucleoside triphosphate and OAA. In Parabacteroides distasonis (strain ATCC 8503 / DSM 20701 / CIP 104284 / JCM 5825 / NCTC 11152), this protein is Phosphoenolpyruvate carboxykinase (ATP).